A 316-amino-acid chain; its full sequence is 2,3-dihydroxyphenylpropionate/2,3-dihydroxicinnamic acid 1,2-dioxygenase (316 aa).

The Proton donor role is filled by His-115. The Proton acceptor role is filled by His-180.

Belongs to the LigB/MhpB extradiol dioxygenase family. As to quaternary structure, homotetramer. Fe(2+) serves as cofactor.

It carries out the reaction 3-(2,3-dihydroxyphenyl)propanoate + O2 = (2Z,4E)-2-hydroxy-6-oxonona-2,4-dienedioate + H(+). It catalyses the reaction (2E)-3-(2,3-dihydroxyphenyl)prop-2-enoate + O2 = (2Z,4E,7E)-2-hydroxy-6-oxonona-2,4,7-trienedioate + H(+). It functions in the pathway aromatic compound metabolism; 3-phenylpropanoate degradation. In terms of biological role, catalyzes the non-heme iron(II)-dependent oxidative cleavage of 2,3-dihydroxyphenylpropionic acid and 2,3-dihydroxicinnamic acid into 2-hydroxy-6-ketononadienedioate and 2-hydroxy-6-ketononatrienedioate, respectively. The chain is 2,3-dihydroxyphenylpropionate/2,3-dihydroxicinnamic acid 1,2-dioxygenase from Rhodococcus rhodochrous.